The following is a 340-amino-acid chain: DnaJ homolog subfamily B member 1 (340 aa).

The region spanning 2–70 (GKDYYQTLGL…REIFDRYGEE (69 aa)) is the J domain. Position 307 is a phosphothreonine (threonine 307).

In terms of assembly, interacts with DNAJC3. Interacts with HSF1 (via transactivation domain); this interaction results in the inhibition of heat shock- and HSF1-induced transcriptional activity during the attenuation and recovery phase period of the heat shock response. Interacts with BAG3.

It is found in the cytoplasm. It localises to the nucleus. The protein resides in the nucleolus. Functionally, interacts with HSP70 and can stimulate its ATPase activity. Stimulates the association between HSC70 and HIP. Negatively regulates heat shock-induced HSF1 transcriptional activity during the attenuation and recovery phase period of the heat shock response. Stimulates ATP hydrolysis and the folding of unfolded proteins mediated by HSPA1A/B (in vitro). The chain is DnaJ homolog subfamily B member 1 (Dnajb1) from Mus musculus (Mouse).